Consider the following 527-residue polypeptide: Amine oxidase [flavin-containing] A (527 aa).

Met1 carries the N-acetylmethionine modification. At 1–497 (MASREKTSIE…HTFWERNLPS (497 aa)) the chain is on the cytoplasmic side. Ser383 is modified (phosphoserine). Cys406 carries the post-translational modification S-8alpha-FAD cysteine. A helical; Anchor for type IV membrane protein transmembrane segment spans residues 498-518 (VTGLLKLIGFTTSVTALWIVA). Over 519-527 (YKFRLLRRS) the chain is Mitochondrial intermembrane. The segment at 520-522 (KFR) is interaction with membrane phospholipid headgroups.

The protein belongs to the flavin monoamine oxidase family. In terms of assembly, monomer, homo- or heterodimer (containing two subunits of similar size). Each subunit contains a covalently bound flavin. Enzymatically active as monomer. FAD serves as cofactor.

The protein resides in the mitochondrion outer membrane. It catalyses the reaction a secondary aliphatic amine + O2 + H2O = a primary amine + an aldehyde + H2O2. The enzyme catalyses a primary methyl amine + O2 + H2O = an aldehyde + H2O2 + NH4(+). It carries out the reaction (R)-adrenaline + O2 + H2O = (R)-3,4-dihydroxymandelaldehyde + methylamine + H2O2. The catalysed reaction is dopamine + O2 + H2O = 3,4-dihydroxyphenylacetaldehyde + H2O2 + NH4(+). It catalyses the reaction tyramine + O2 + H2O = (4-hydroxyphenyl)acetaldehyde + H2O2 + NH4(+). The enzyme catalyses (R)-noradrenaline + O2 + H2O = (R)-3,4-dihydroxymandelaldehyde + H2O2 + NH4(+). It carries out the reaction serotonin + O2 + H2O = (5-hydroxyindol-3-yl)acetaldehyde + H2O2 + NH4(+). The catalysed reaction is kynuramine + O2 + H2O = 3-(2-aminophenyl)-3-oxopropanal + H2O2 + NH4(+). It catalyses the reaction tryptamine + O2 + H2O = indole-3-acetaldehyde + H2O2 + NH4(+). The enzyme catalyses 2-phenylethylamine + O2 + H2O = 2-phenylacetaldehyde + H2O2 + NH4(+). Its function is as follows. Catalyzes the oxidative deamination of primary and some secondary amine such as neurotransmitters, with concomitant reduction of oxygen to hydrogen peroxide and has important functions in the metabolism of neuroactive and vasoactive amines in the central nervous system and peripheral tissues. Preferentially oxidizes serotonin. Also catalyzes the oxidative deamination of kynuramine to 3-(2-aminophenyl)-3-oxopropanal that can spontaneously condense to 4-hydroxyquinoline. The chain is Amine oxidase [flavin-containing] A from Canis lupus familiaris (Dog).